Consider the following 384-residue polypeptide: Magnesium transporter MRS2-I (384 aa).

2 helical membrane passes run 319–339 (LFLS…GIFG) and 356–376 (WVVL…VAYA). The Required for magnesium transport activity signature appears at 339–341 (GMN).

It belongs to the CorA metal ion transporter (MIT) (TC 1.A.35.5) family.

It localises to the membrane. Magnesium transporter that may mediate the influx of magnesium. In Oryza sativa subsp. japonica (Rice), this protein is Magnesium transporter MRS2-I (MRS2-I).